A 1147-amino-acid chain; its full sequence is Probable phospholipid-transporting ATPase IIB (1147 aa).

Topologically, residues 1–146 (MADQIPLYPV…NQKYNVFTFI (146 aa)) are cytoplasmic. A helical membrane pass occupies residues 147-168 (PGVLYEQFKFFLNLYFLVISCS). The Extracellular portion of the chain corresponds to 169–173 (QFVPA). A helical membrane pass occupies residues 174-196 (LKIGYLYTYWAPLGFVLAVTMTR). Topologically, residues 197–380 (EAIDEFRRFQ…GLLDLELNRL (184 aa)) are cytoplasmic. The chain crosses the membrane as a helical span at residues 381–401 (TKALFLALVALSIVMVTLQGF). Residues 402-409 (VGPWYRNL) are Extracellular-facing. A helical membrane pass occupies residues 410–431 (FRFLLLFSYIIPISLRVNLDMG). Over 432 to 930 (KAVYGWMMMK…GRNSYKRSAA (499 aa)) the chain is Cytoplasmic. Aspartate 468 (4-aspartylphosphate intermediate) is an active-site residue. ATP is bound by residues aspartate 468, lysine 469, and threonine 470. Aspartate 468 lines the Mg(2+) pocket. Residue threonine 470 participates in Mg(2+) binding. Residues 503 to 535 (RDSYSQMQSQAGGNNTGSTPLRKAQSSAPKVRK) are disordered. A compositionally biased stretch (polar residues) spans 505–530 (SYSQMQSQAGGNNTGSTPLRKAQSSA). The ATP site is built by glutamate 591, phenylalanine 633, lysine 638, lysine 657, arginine 686, threonine 687, threonine 766, glycine 767, aspartate 768, arginine 848, and lysine 854. Aspartate 874 contributes to the Mg(2+) binding site. 2 residues coordinate ATP: asparagine 877 and aspartate 878. Mg(2+) is bound at residue aspartate 878. Residues 931–951 (LGQFVMHRGLIISTMQAVFSS) form a helical membrane-spanning segment. Topologically, residues 952–963 (VFYFASVPLYQG) are extracellular. Residues 964-982 (FLMVGYATIYTMFPVFSLV) traverse the membrane as a helical segment. The Cytoplasmic segment spans residues 983-1012 (LDQDVKPEMAMLYPELYKDLTKGRSLSFKT). A helical transmembrane segment spans residues 1013–1031 (FLIWVLISIYQGGILMYGA). At 1032–1038 (LVLFESE) the chain is on the extracellular side. The helical transmembrane segment at 1039-1061 (FVHVVAISFTALILTELLMVALT) threads the bilayer. Over 1062 to 1067 (VRTWHW) the chain is Cytoplasmic. Residues 1068–1088 (LMVVAEFLSLGCYVSSLAFLN) form a helical membrane-spanning segment. The Extracellular portion of the chain corresponds to 1089 to 1105 (EYFGIGRVSFGAFLDVA). Residues 1106–1130 (FITTVTFLWKVSAITVVSCLPLYVL) traverse the membrane as a helical segment. At 1131-1147 (KYLRRKLSPPSYCKLAS) the chain is on the cytoplasmic side.

It belongs to the cation transport ATPase (P-type) (TC 3.A.3) family. Type IV subfamily. Requires Mg(2+) as cofactor.

The protein localises to the golgi apparatus. Its subcellular location is the trans-Golgi network membrane. It carries out the reaction ATP + H2O + phospholipidSide 1 = ADP + phosphate + phospholipidSide 2.. This Homo sapiens (Human) protein is Probable phospholipid-transporting ATPase IIB (ATP9B).